We begin with the raw amino-acid sequence, 174 residues long: Actin-related protein 2/3 complex subunit 3 (174 aa).

This sequence belongs to the ARPC3 family. In terms of assembly, component of the Arp2/3 complex composed of arpB/Arp2, arpC/Arp3, arcA/p41-arc, arcB/p34-arc, arcC/p21-arc, arcD/p20-arc and arcE/p16-arc. Interacts with carmil (via the region between the LRR domain and COOH-terminal proline-rich domain); carmil is required for Arp2/3-dependent actin nucleation. Arp2/3 complex, MyoB, MyoC, and the alpha and beta subunits of capping protein all form a larger complex with carmil.

It localises to the cytoplasm. The protein localises to the cytoskeleton. The protein resides in the cytosol. It is found in the cell cortex. Its subcellular location is the cell projection. It localises to the pseudopodium. In terms of biological role, functions as a component of the Arp2/3 complex which is involved in regulation of actin polymerization and together with an activating nucleation-promoting factor (NPF) mediates the formation of branched actin networks. Seems to contact the pointed end of the daughter actin filament. The Arp2/3 complex is involved in organizing the actin system in cell motility and chemotaxis, in phagocytosis and macropinocytosis, at late steps of endosome processing, and in mitosis. In concert with a group of other proteins, the Arp2/3 complex plays a general role in the rapid activation and adaptation of the actin system to its multiple functions. This chain is Actin-related protein 2/3 complex subunit 3 (arcC), found in Dictyostelium discoideum (Social amoeba).